The chain runs to 447 residues: GTPase Der (447 aa).

EngA-type G domains follow at residues 2 to 166 (YRVA…PEYE) and 183 to 358 (IKVA…NQSW). GTP contacts are provided by residues 8-15 (GRPNVGKS), 55-59 (DTGGY), 118-121 (NKID), 189-196 (GKPNAGKS), 236-240 (DTAGL), and 301-304 (NKID). The KH-like domain maps to 359 to 443 (KRVGTGQLNR…PIKLLLRGKE (85 aa)).

It belongs to the TRAFAC class TrmE-Era-EngA-EngB-Septin-like GTPase superfamily. EngA (Der) GTPase family. As to quaternary structure, associates with the 50S ribosomal subunit.

In terms of biological role, GTPase that plays an essential role in the late steps of ribosome biogenesis. This is GTPase Der from Persephonella marina (strain DSM 14350 / EX-H1).